A 627-amino-acid polypeptide reads, in one-letter code: Phosphomethylpyrimidine synthase (627 aa).

The interval 1–21 (MSVQSNKNLSESAQVDQQSIQ) is disordered. Substrate is bound by residues N231, M260, Y289, H325, 345–347 (SRG), 386–389 (DGLR), and E425. H429 provides a ligand contact to Zn(2+). Y452 lines the substrate pocket. Residue H493 participates in Zn(2+) binding. Positions 573, 576, and 581 each coordinate [4Fe-4S] cluster.

This sequence belongs to the ThiC family. Homodimer. Requires [4Fe-4S] cluster as cofactor.

The catalysed reaction is 5-amino-1-(5-phospho-beta-D-ribosyl)imidazole + S-adenosyl-L-methionine = 4-amino-2-methyl-5-(phosphooxymethyl)pyrimidine + CO + 5'-deoxyadenosine + formate + L-methionine + 3 H(+). The protein operates within cofactor biosynthesis; thiamine diphosphate biosynthesis. Its function is as follows. Catalyzes the synthesis of the hydroxymethylpyrimidine phosphate (HMP-P) moiety of thiamine from aminoimidazole ribotide (AIR) in a radical S-adenosyl-L-methionine (SAM)-dependent reaction. The protein is Phosphomethylpyrimidine synthase of Stutzerimonas stutzeri (strain A1501) (Pseudomonas stutzeri).